A 186-amino-acid chain; its full sequence is ATP synthase subunit delta (186 aa).

It belongs to the ATPase delta chain family. F-type ATPases have 2 components, F(1) - the catalytic core - and F(0) - the membrane proton channel. F(1) has five subunits: alpha(3), beta(3), gamma(1), delta(1), epsilon(1). CF(0) has four main subunits: a(1), b(1), b'(1) and c(10-14). The alpha and beta chains form an alternating ring which encloses part of the gamma chain. F(1) is attached to F(0) by a central stalk formed by the gamma and epsilon chains, while a peripheral stalk is formed by the delta, b and b' chains.

It is found in the cell inner membrane. Functionally, f(1)F(0) ATP synthase produces ATP from ADP in the presence of a proton or sodium gradient. F-type ATPases consist of two structural domains, F(1) containing the extramembraneous catalytic core and F(0) containing the membrane proton channel, linked together by a central stalk and a peripheral stalk. During catalysis, ATP synthesis in the catalytic domain of F(1) is coupled via a rotary mechanism of the central stalk subunits to proton translocation. In terms of biological role, this protein is part of the stalk that links CF(0) to CF(1). It either transmits conformational changes from CF(0) to CF(1) or is implicated in proton conduction. This Rhodospirillum rubrum (strain ATCC 11170 / ATH 1.1.1 / DSM 467 / LMG 4362 / NCIMB 8255 / S1) protein is ATP synthase subunit delta.